The chain runs to 319 residues: Ankyrin repeat domain-containing protein 1 (319 aa).

A coiled-coil region spans residues 55–89 (LGEEQRKSEKVREAELKKKKLEQRSKLENLEDLEI). 5 ANK repeats span residues 152–181 (YKRT…QIEF), 185–214 (LEST…KISA), 218–247 (LLST…DLNA), 251–280 (EGDT…DLNV), and 284–315 (AGKT…KNSR).

In terms of assembly, interacts with TTN/titin. Interacts with YBX1. Expressed in heart, cardiac muscle.

The protein resides in the nucleus. May play an important role in endothelial cell activation. May act as a nuclear transcription factor that negatively regulates the expression of cardiac genes. The sequence is that of Ankyrin repeat domain-containing protein 1 (Ankrd1) from Rattus norvegicus (Rat).